Here is a 1041-residue protein sequence, read N- to C-terminus: Putative transcription elongation factor SPT5 homolog 1 (1041 aa).

The segment at 1 to 133 (MPRSRDEDDE…ERGDRRYERR (133 aa)) is disordered. 3 stretches are compositionally biased toward acidic residues: residues 7–32 (EDDE…EEEE), 53–69 (DYAE…DEDY), and 99–114 (DDED…DDFI). S59 is modified (phosphoserine). The span at 122-133 (PDERGDRRYERR) shows a compositional bias: basic and acidic residues. 4 KOW domains span residues 273-300 (DLSR…VDNV), 425-452 (HFMK…VDEE), 477-504 (YFEP…VDQH), and 601-628 (VIAV…IYKG). Disordered stretches follow at residues 662 to 713 (NRNG…GDDS) and 768 to 921 (DTSR…GTGL). Residues 691–703 (GRGGGYNNSGGRH) are compositionally biased toward gly residues. The KOW 5 domain maps to 712-739 (DSLLGTTVKIRLGPFKGYRGPVVEVKGN). A compositionally biased stretch (basic and acidic residues) spans 804–814 (DGMRTPMRDRA). Polar residues-rich tracts occupy residues 835–844 (SWGTSPQYQP) and 893–904 (TPGQPMTPSSAS). The 28-residue stretch at 988 to 1015 (PPRKSDRVKIVGGQYRGSTGKLIGIDGS) folds into the KOW 6 domain.

This sequence belongs to the SPT5 family.

The protein localises to the nucleus. In terms of biological role, may regulate transcription elongation by RNA polymerase II. May enhance transcriptional pausing at sites proximal to the promoter, which may in turn facilitate the assembly of an elongation competent RNA polymerase II complex. The protein is Putative transcription elongation factor SPT5 homolog 1 of Arabidopsis thaliana (Mouse-ear cress).